A 249-amino-acid polypeptide reads, in one-letter code: AA9 family lytic polysaccharide monooxygenase cel61B (249 aa).

Residues 1 to 19 form the signal peptide; the sequence is MKSCAILAALGCLAGSVLG. H20 serves as a coordination point for Cu(2+). N25 carries N-linked (GlcNAc...) asparagine glycosylation. 2 disulfides stabilise this stretch: C78–C198 and C120–C124. Residue H108 coordinates Cu(2+). O2 contacts are provided by H184 and Q193. Y195 is a binding site for Cu(2+).

It belongs to the polysaccharide monooxygenase AA9 family. Monomer. Requires Cu(2+) as cofactor.

The protein resides in the secreted. It catalyses the reaction [(1-&gt;4)-beta-D-glucosyl]n+m + reduced acceptor + O2 = 4-dehydro-beta-D-glucosyl-[(1-&gt;4)-beta-D-glucosyl]n-1 + [(1-&gt;4)-beta-D-glucosyl]m + acceptor + H2O.. Functionally, lytic polysaccharide monooxygenase (LPMO) that depolymerizes crystalline and amorphous polysaccharides via the oxidation of scissile alpha- or beta-(1-4)-glycosidic bonds, yielding C1 or C4 oxidation products. Catalysis by LPMOs requires the reduction of the active-site copper from Cu(II) to Cu(I) by a reducing agent and H(2)O(2) or O(2) as a cosubstrate. The chain is AA9 family lytic polysaccharide monooxygenase cel61B from Hypocrea jecorina (strain QM6a) (Trichoderma reesei).